The chain runs to 396 residues: Acetyl-CoA acetyltransferase (396 aa).

Cysteine 88 acts as the Acyl-thioester intermediate in catalysis. Active-site proton acceptor residues include histidine 352 and cysteine 382.

The protein belongs to the thiolase-like superfamily. Thiolase family. In terms of assembly, homotetramer.

The catalysed reaction is 2 acetyl-CoA = acetoacetyl-CoA + CoA. It functions in the pathway biopolymer metabolism; poly-(R)-3-hydroxybutanoate biosynthesis. Functionally, when expressed in E.coli with Synechocystis PhaB, PhaC and PhaE confers the ability to synthesize up to 12% (w/w) poly(3-hydroxybutyrate) (PHB) depending on the carbon source. This chain is Acetyl-CoA acetyltransferase, found in Synechocystis sp. (strain ATCC 27184 / PCC 6803 / Kazusa).